Here is a 192-residue protein sequence, read N- to C-terminus: dTDP-3-amino-3,6-dideoxy-alpha-D-galactopyranose 3-N-acetyltransferase (192 aa).

This sequence belongs to the transferase hexapeptide repeat family.

It carries out the reaction dTDP-3-amino-3,6-dideoxy-alpha-D-galactopyranose + acetyl-CoA = dTDP-3-acetamido-3,6-dideoxy-alpha-D-galactopyranose + CoA + H(+). In terms of biological role, catalyzes the transfer of an acetyl group to dTDP-D-Fucp3N to form dTDP-D-Fucp3NAc in the biosynthesis of dTDP-3-acetamido-3,6-dideoxy-alpha-D-galactose, a glycan chain of the S-layer. In Aneurinibacillus thermoaerophilus, this protein is dTDP-3-amino-3,6-dideoxy-alpha-D-galactopyranose 3-N-acetyltransferase (fdtC).